Reading from the N-terminus, the 398-residue chain is Membrane-spanning 4-domains subfamily A member 18 (398 aa).

The next 4 membrane-spanning stretches (helical) occupy residues 156-176, 178-198, 218-238, and 251-271; these read LGAI…NPVL, YYPF…SYIV, SISF…IIIT, and AVSG…CVVS. Positions 316–346 are disordered; sequence TGPVSATNGPVNTTIHPVNTTTSPVNTTTSP. Positions 319-331 are enriched in polar residues; it reads VSATNGPVNTTIH. A compositionally biased stretch (low complexity) spans 332 to 346; the sequence is PVNTTTSPVNTTTSP.

The protein belongs to the MS4A family.

Its subcellular location is the membrane. The chain is Membrane-spanning 4-domains subfamily A member 18 (MS4A18) from Homo sapiens (Human).